Here is a 172-residue protein sequence, read N- to C-terminus: Epididymal secretory protein 4 (172 aa).

The first 21 residues, M1–A21, serve as a signal peptide directing secretion. C82 and C167 are oxidised to a cystine.

Belongs to the calycin superfamily. Lipocalin family. In terms of tissue distribution, secreted by the epididymal epithelial cells.

Its subcellular location is the secreted. It localises to the extracellular space. Its function is as follows. Could transport small hydrophobic molecules into the epididymal fluid during the sperm maturation. Binds to the head region of spermatozoa and plays a key role in sperm maturation. This is Epididymal secretory protein 4 from Zootoca vivipara (Common lizard).